Consider the following 32-residue polypeptide: MSDIN-like toxin proprotein 3 (32 aa).

Positions 1 to 10 (MSDINATRLP) are excised as a propeptide. Positions 11–17 (VWIGYSP) form a cross-link, cyclopeptide (Val-Pro). Positions 18–32 (CVGDDAVALLNRGEG) are excised as a propeptide.

The protein belongs to the MSDIN fungal toxin family. Post-translationally, processed by the macrocyclase-peptidase enzyme POPB to yield a toxic cyclic heptapeptide. POPB first removes 10 residues from the N-terminus. Conformational trapping of the remaining peptide forces the enzyme to release this intermediate rather than proceed to macrocyclization. The enzyme rebinds the remaining peptide in a different conformation and catalyzes macrocyclization of the N-terminal 7 residues.

Functionally, probable toxin that belongs to the MSDIN-like toxin family responsible for a large number of food poisoning cases and deaths. This is MSDIN-like toxin proprotein 3 from Amanita fuligineoides.